The chain runs to 208 residues: Glutathione S-transferase F6 (208 aa).

Residues 2–83 (AGIKVFGHPA…YIAHEFSDKG (82 aa)) enclose the GST N-terminal domain. Glutathione contacts are provided by residues 12 to 13 (ST), 41 to 42 (HK), 54 to 55 (KV), and 67 to 68 (ES). Positions 89–208 (TGKDMAIIAM…TSRPSAQKVL (120 aa)) constitute a GST C-terminal domain.

The protein belongs to the GST superfamily. Phi family.

The protein resides in the cytoplasm. It localises to the cytosol. It carries out the reaction RX + glutathione = an S-substituted glutathione + a halide anion + H(+). Its function is as follows. Involved in camalexin biosynthesis by probably catalyzing the conjugation of GSH with indole-3-acetonitrile (IAN). May be involved in the conjugation of reduced glutathione to a wide number of exogenous and endogenous hydrophobic electrophiles and have a detoxification role against certain herbicides. The polypeptide is Glutathione S-transferase F6 (GSTF6) (Arabidopsis thaliana (Mouse-ear cress)).